Reading from the N-terminus, the 377-residue chain is D-alanine--D-alanine ligase (377 aa).

The region spanning 140 to 349 is the ATP-grasp domain; that stretch reads KELLTVNGIR…NAKLVDMLID (210 aa). Position 170–225 (170–225) interacts with ATP; that stretch reads VAELGNIVFVKAANQGSSVGISRVTNAEEYTEALSDSFQYDYKVLIEEAVNGAREL. Positions 303, 316, and 318 each coordinate Mg(2+).

Belongs to the D-alanine--D-alanine ligase family. Mg(2+) is required as a cofactor. Requires Mn(2+) as cofactor.

It is found in the cytoplasm. The enzyme catalyses 2 D-alanine + ATP = D-alanyl-D-alanine + ADP + phosphate + H(+). Its pathway is cell wall biogenesis; peptidoglycan biosynthesis. Cell wall formation. The chain is D-alanine--D-alanine ligase from Leuconostoc mesenteroides.